Here is a 405-residue protein sequence, read N- to C-terminus: 4-hydroxy-3-methylbut-2-en-1-yl diphosphate synthase (flavodoxin) (405 aa).

Residues Cys-297, Cys-300, Cys-343, and Glu-350 each contribute to the [4Fe-4S] cluster site.

This sequence belongs to the IspG family. [4Fe-4S] cluster serves as cofactor.

The catalysed reaction is (2E)-4-hydroxy-3-methylbut-2-enyl diphosphate + oxidized [flavodoxin] + H2O + 2 H(+) = 2-C-methyl-D-erythritol 2,4-cyclic diphosphate + reduced [flavodoxin]. The protein operates within isoprenoid biosynthesis; isopentenyl diphosphate biosynthesis via DXP pathway; isopentenyl diphosphate from 1-deoxy-D-xylulose 5-phosphate: step 5/6. In terms of biological role, converts 2C-methyl-D-erythritol 2,4-cyclodiphosphate (ME-2,4cPP) into 1-hydroxy-2-methyl-2-(E)-butenyl 4-diphosphate. The sequence is that of 4-hydroxy-3-methylbut-2-en-1-yl diphosphate synthase (flavodoxin) from Francisella tularensis subsp. mediasiatica (strain FSC147).